A 978-amino-acid polypeptide reads, in one-letter code: Peroxisomal ATPase PEX6 (978 aa).

The residue at position 119 (Arg119) is an Omega-N-methylarginine. ATP is bound by residues 470–477 and 742–749; these read GPPGSGKT and GPPGTGKT.

This sequence belongs to the AAA ATPase family. As to quaternary structure, interacts with PEX1; forming the PEX1-PEX6 AAA ATPase complex, which is composed of a heterohexamer formed by a trimer of PEX1-PEX6 dimers. Interacts with PEX26; interaction is direct and promotes recruitment to peroxisomal membranes. Interacts with ZFAND6.

The protein resides in the cytoplasm. The protein localises to the cytosol. It localises to the peroxisome membrane. Its subcellular location is the cell projection. It is found in the cilium. The protein resides in the photoreceptor outer segment. The enzyme catalyses ATP + H2O = ADP + phosphate + H(+). Its function is as follows. Component of the PEX1-PEX6 AAA ATPase complex, a protein dislocase complex that mediates the ATP-dependent extraction of the PEX5 receptor from peroxisomal membranes, an essential step for PEX5 recycling. Specifically recognizes PEX5 monoubiquitinated at 'Cys-11', and pulls it out of the peroxisome lumen through the PEX2-PEX10-PEX12 retrotranslocation channel. Extraction by the PEX1-PEX6 AAA ATPase complex is accompanied by unfolding of the TPR repeats and release of bound cargo from PEX5. This chain is Peroxisomal ATPase PEX6, found in Rattus norvegicus (Rat).